A 203-amino-acid chain; its full sequence is uncharacterized protein (203 aa).

Disordered regions lie at residues 65–84 and 92–170; these read LSLS…SFDS and SSSS…ETAL. Composition is skewed to acidic residues over residues 68–82 and 98–110; these read SEDE…EDSF and SEEE…EESL. Residues 111–122 show a composition bias toward low complexity; the sequence is DSSFLVSASLSL. Residues 123-168 are compositionally biased toward acidic residues; it reads SEDDEEEDSESEDEDEDEDSDSDSDSDSDSDEDEDEDEDSEEEEET. Residues 182 to 202 traverse the membrane as a helical segment; the sequence is TSFLLPFTLVVLAILFYPAWV.

Its subcellular location is the membrane. This is an uncharacterized protein from Saccharomyces cerevisiae (strain ATCC 204508 / S288c) (Baker's yeast).